Consider the following 81-residue polypeptide: Putative membrane protein insertion efficiency factor (81 aa).

The tract at residues 61–81 is disordered; the sequence is NPGGYDPVPPIPTSRSSSMAE.

The protein belongs to the UPF0161 family.

The protein resides in the cell inner membrane. In terms of biological role, could be involved in insertion of integral membrane proteins into the membrane. The protein is Putative membrane protein insertion efficiency factor of Pseudomonas fluorescens (strain Pf0-1).